Here is a 249-residue protein sequence, read N- to C-terminus: Pyridoxamine 5'-phosphate oxidase family protein ustO (249 aa).

Leu-21 to Val-24 serves as a coordination point for substrate. FMN contacts are provided by residues Ala-76 to Cys-81, Arg-91 to Leu-92, Arg-105, and Arg-163 to Leu-164. A substrate-binding site is contributed by Ala-215–Tyr-217. A helical transmembrane segment spans residues Thr-227–Tyr-247.

It belongs to the pyridoxamine 5'-phosphate oxidase family. Requires FMN as cofactor.

Its subcellular location is the membrane. It functions in the pathway mycotoxin biosynthesis. Functionally, pyridoxamine 5'-phosphate oxidase family protein; part of the gene cluster that mediates the biosynthesis of the secondary metabolite ustiloxin B, an antimitotic tetrapeptide. First, ustA is processed by the subtilisin-like endoprotease Kex2 that is outside the ustiloxin B gene cluster, at the C-terminal side of Arg-Lys, after transfer to Golgi apparatus through the endoplasmic reticulum (ER). Cleavage by KEX2 generates 16 peptides YAIG-I to YAIG-XVI. To process the precursor peptide further, at least two peptidases are necessary to cleave the N-terminal and C-terminal sides of the Tyr-Ala-Ile-Gly core peptide which serves as backbone for the synthesis of ustiloxin B, through cyclization and modification of the tyrosine with a non-protein coding amino acid, norvaline. One of the two peptidases must be the serine peptidase ustP; and the other pepdidase is probably ustH. Macrocyclization of the core peptide derived from ustA requires the tyrosinase ustQ, as well as the homologous oxidases ustYa and ustYb, and leads to the production of the first cyclization product N-desmethylustiloxin F. For the formation of N-desmethylustiloxin F, three oxidation steps are required, hydroxylation at the benzylic position, hydroxylation at either the aromatic ring of Tyr or beta-position of Ile, and oxidative cyclization. UstQ may catalyze the oxidation of a phenol moiety, whereas the ustYa and ustYb are most likely responsible for the remaining two-step oxidations. N-desmethylustiloxin F is then methylated by ustM to yield ustiloxin F which in turn substrate of the cytochrome P450 monooxygenase ustC which catalyzes the formation of S-deoxyustiloxin H. The flavoprotein monooxygenases ustF1 and ustF2 then participate in the modification of the side chain of S-deoxyustiloxin H, leading to the synthesis of an oxime intermediate, via ustiloxin H. Finally, carboxylative dehydration performed by the cysteine desulfurase-like protein ustD yields ustiloxin B. This Aspergillus flavus (strain ATCC 200026 / FGSC A1120 / IAM 13836 / NRRL 3357 / JCM 12722 / SRRC 167) protein is Pyridoxamine 5'-phosphate oxidase family protein ustO.